Here is a 1512-residue protein sequence, read N- to C-terminus: ATP-dependent permease YOR1 (1512 aa).

A disordered region spans residues 1–68 (MSPLLPTHWG…KGMKETEDGG (68 aa)). Residues 13-29 (APQNEPTLPSPSHSVST) show a composition bias toward polar residues. The span at 31-65 (VGDEEKLRRSEGSDGEDRINLDSNKYDVKGMKETE) shows a compositional bias: basic and acidic residues. Transmembrane regions (helical) follow at residues 229 to 249 (ASLAMSLLDVFGWFFMSAGFI), 288 to 308 (GPGIGAAIGLLLLLICSSLGM), 363 to 385 (FAAGFSHMLWTAPVQMIVIIIIL), 475 to 495 (GMTAIAMSLPILAAILSFITY), and 507 to 527 (IFTVITLFNLMRMPLMMWPMT). The region spanning 246-533 (AGFIKVFGDT…WPMTLSSTAD (288 aa)) is the ABC transmembrane type-1 1 domain. Residues 594-656 (VLNGGKPGGP…SAPGIDEEIS (63 aa)) form a disordered region. Positions 619–643 (AEEIQAETAAGQPGAGEASAEGQGQ) are enriched in low complexity. The region spanning 651 to 871 (IDEEISEKKE…NGAFAKLIKE (221 aa)) is the ABC transporter 1 domain. Residue 683–690 (GAIGSGKS) participates in ATP binding. 4 helical membrane passes run 937-957 (GVFMLPLLFFCIVVAQSFYVI), 974-994 (NGFYMGIYAGLGVGLAIALFF), 1067-1087 (VILLAIIEPYFLIAMAVVSLL), and 1167-1187 (FLGSLLSFSVAIIVVCSSSVS). The region spanning 943–1217 (LLFFCIVVAQ…LVRQIAEVEN (275 aa)) is the ABC transmembrane type-1 2 domain. Positions 1255–1496 (IEFKDVRMRY…GGIFTEMCSK (242 aa)) constitute an ABC transporter 2 domain. 1289–1296 (GRTGAGKS) lines the ATP pocket.

It belongs to the ABC transporter superfamily. ABCC family. Conjugate transporter (TC 3.A.1.208) subfamily.

The protein localises to the extracellular vesicle membrane. The protein resides in the secreted. Transmembrane transporter. May play a role in the packaging or formation of extracellular vesicles (EVs), and in the export of virulence factors from EVs. Required for efficient non-lytic exocytosis from host macrophages, the process by which the yeast escapes host macrophages with both host cell and pathogen remaining viable. This chain is ATP-dependent permease YOR1, found in Cryptococcus neoformans var. grubii serotype A (strain H99 / ATCC 208821 / CBS 10515 / FGSC 9487) (Filobasidiella neoformans var. grubii).